A 263-amino-acid chain; its full sequence is uncharacterized protein (263 aa).

The signal sequence occupies residues 1–22 (MEYLKRLALLISVIILTIFIMG). Cys-23 carries the N-palmitoyl cysteine lipid modification. Cys-23 is lipidated: S-diacylglycerol cysteine.

Belongs to the staphylococcal tandem lipoprotein family.

The protein localises to the cell membrane. This is an uncharacterized protein from Staphylococcus aureus (strain USA300).